The sequence spans 131 residues: ATP synthase epsilon chain (131 aa).

It belongs to the ATPase epsilon chain family. As to quaternary structure, F-type ATPases have 2 components, CF(1) - the catalytic core - and CF(0) - the membrane proton channel. CF(1) has five subunits: alpha(3), beta(3), gamma(1), delta(1), epsilon(1). CF(0) has three main subunits: a, b and c.

It localises to the cell membrane. Its function is as follows. Produces ATP from ADP in the presence of a proton gradient across the membrane. The protein is ATP synthase epsilon chain of Clostridium novyi (strain NT).